Consider the following 673-residue polypeptide: Outer spore wall assembly protein SHE10 (673 aa).

A signal peptide spans 1-24; that stretch reads MRRVRGVGNLLVTILVVLIGFKQA. Positions 503–568 form a coiled coil; that stretch reads ILRSQANIAF…LALEQGQGQE (66 aa). Disordered regions lie at residues 530–551 and 587–673; these read LEQE…AENE and TPLG…SQAN. Acidic residues-rich tracts occupy residues 593-605 and 612-629; these read DNTD…DDAD and GDSE…EEDA. The stretch at 617–647 forms a coiled coil; the sequence is NFYDSYEGDEEDASRELERLERESAERETLD. The span at 630 to 673 shows a compositional bias: basic and acidic residues; that stretch reads SRELERLERESAERETLDRLELGQRQKLQEEQHRDELHHSSQAN.

It belongs to the SHE10 family. Component of the mitochondria-localized RNase mitochondrial RNA-processing (RNase MRP) composed of one single RNA encoded by the NME1 gene and at least 31 proteins. Absent in the nucleus-localized RNase MRP (NuMRP).

The protein resides in the mitochondrion. Its function is as follows. Involved in spore wall assembly. May be a component of the mitochondrial RNase MRP (MtMRP), a ribonucleoprotein endoribonuclease involved in the cleaving RNA transcripts to generate primers for DNA replication in mitochondria. The chain is Outer spore wall assembly protein SHE10 from Lachancea thermotolerans (strain ATCC 56472 / CBS 6340 / NRRL Y-8284) (Yeast).